Reading from the N-terminus, the 225-residue chain is Small ribosomal subunit protein uS3 (225 aa).

The region spanning 16 to 85 (VCEYVVKETE…TPQIEVKDVK (70 aa)) is the KH type-2 domain. Positions 202 to 225 (EVGTESKADQTDVEGRETGNAEES) are disordered. Positions 205–225 (TESKADQTDVEGRETGNAEES) are enriched in basic and acidic residues.

Belongs to the universal ribosomal protein uS3 family. In terms of assembly, part of the 30S ribosomal subunit.

Binds the lower part of the 30S subunit head. This chain is Small ribosomal subunit protein uS3, found in Thermoplasma acidophilum (strain ATCC 25905 / DSM 1728 / JCM 9062 / NBRC 15155 / AMRC-C165).